Reading from the N-terminus, the 345-residue chain is Transcription factor 19 (345 aa).

The region spanning 31 to 88 (YRLGHRADLCDVALRPQQEPGLISGIHAELHAEPRGDDWRVSLEDHSSQGTLVNNVRL) is the FHA domain. Phosphoserine is present on serine 78. The tract at residues 190–227 (LTFSPSWGGPKSLPVPAPPGEMGTTPSAPPQRNRRKSV) is disordered. The segment at 293 to 342 (AAPCCCLPQEETVAWVQCDGCDVWFHVACVGCSIQAAREADFRCPGCRAG) adopts a PHD-type zinc-finger fold. The Zn(2+) site is built by cysteine 296, cysteine 298, cysteine 310, cysteine 313, histidine 318, cysteine 321, cysteine 336, and cysteine 339.

The protein localises to the nucleus. Potential transcription factor that may play a role in the regulation of genes involved in cell cycle G1/S transition. May bind to regulatory elements of genes, including the promoter of the transcription factor FOXO1. The sequence is that of Transcription factor 19 (TCF19) from Homo sapiens (Human).